The chain runs to 393 residues: NAD(P)H-quinone oxidoreductase subunit H, chloroplastic (393 aa).

This sequence belongs to the complex I 49 kDa subunit family. In terms of assembly, NDH is composed of at least 16 different subunits, 5 of which are encoded in the nucleus.

It is found in the plastid. The protein localises to the chloroplast thylakoid membrane. It catalyses the reaction a plastoquinone + NADH + (n+1) H(+)(in) = a plastoquinol + NAD(+) + n H(+)(out). The enzyme catalyses a plastoquinone + NADPH + (n+1) H(+)(in) = a plastoquinol + NADP(+) + n H(+)(out). Functionally, NDH shuttles electrons from NAD(P)H:plastoquinone, via FMN and iron-sulfur (Fe-S) centers, to quinones in the photosynthetic chain and possibly in a chloroplast respiratory chain. The immediate electron acceptor for the enzyme in this species is believed to be plastoquinone. Couples the redox reaction to proton translocation, and thus conserves the redox energy in a proton gradient. The sequence is that of NAD(P)H-quinone oxidoreductase subunit H, chloroplastic from Fagopyrum esculentum subsp. ancestrale (Wild buckwheat).